The primary structure comprises 547 residues: Chaperonin GroEL (547 aa).

Residues 30 to 33 (TLGP), Lys-51, 87 to 91 (DGTTT), Gly-416, 480 to 482 (NAA), and Asp-496 each bind ATP.

The protein belongs to the chaperonin (HSP60) family. In terms of assembly, forms a cylinder of 14 subunits composed of two heptameric rings stacked back-to-back. Interacts with the co-chaperonin GroES.

The protein resides in the cytoplasm. The catalysed reaction is ATP + H2O + a folded polypeptide = ADP + phosphate + an unfolded polypeptide.. Its function is as follows. Together with its co-chaperonin GroES, plays an essential role in assisting protein folding. The GroEL-GroES system forms a nano-cage that allows encapsulation of the non-native substrate proteins and provides a physical environment optimized to promote and accelerate protein folding. This Pseudoalteromonas translucida (strain TAC 125) protein is Chaperonin GroEL.